The chain runs to 130 residues: Small ribosomal subunit protein uS9 (130 aa).

The interval 104-130 is disordered; that stretch reads LTRDPRMKERRKYGLKKARKAPQFSKR. The segment covering 111 to 130 has biased composition (basic residues); sequence KERRKYGLKKARKAPQFSKR.

It belongs to the universal ribosomal protein uS9 family.

The chain is Small ribosomal subunit protein uS9 from Moorella thermoacetica (strain ATCC 39073 / JCM 9320).